Here is a 201-residue protein sequence, read N- to C-terminus: MSRYRGPRVRIIRRLGVLPGLTNKTPQLKSSSPNQSAAKKISQYRIRLEEKQKLRFHYGITERQLLNYVRIARKAKGSTGQVLLQLLEMRLDNIVFRLGMAPTIPGARQLVNHRHVLVNDCIVDIPSYRCKPEDSITVKNRQKSQAIITKNIDFSQKAKVPNHLTFDSTQKKGLVNQILDRESIGLKINELLVVEYYSRQA.

An S4 RNA-binding domain is found at 89-150 (MRLDNIVFRL…RQKSQAIITK (62 aa)).

It belongs to the universal ribosomal protein uS4 family. As to quaternary structure, part of the 30S ribosomal subunit. Contacts protein S5. The interaction surface between S4 and S5 is involved in control of translational fidelity.

It is found in the plastid. The protein localises to the chloroplast. Functionally, one of the primary rRNA binding proteins, it binds directly to 16S rRNA where it nucleates assembly of the body of the 30S subunit. In terms of biological role, with S5 and S12 plays an important role in translational accuracy. This is Small ribosomal subunit protein uS4c (rps4) from Funaria hygrometrica (Moss).